A 148-amino-acid chain; its full sequence is UPF0591 membrane protein C15E1.02c (148 aa).

A run of 3 helical transmembrane segments spans residues alanine 14–methionine 34, leucine 80–alanine 102, and isoleucine 122–glycine 142.

Belongs to the UPF0591 family.

Its subcellular location is the membrane. This chain is UPF0591 membrane protein C15E1.02c, found in Schizosaccharomyces pombe (strain 972 / ATCC 24843) (Fission yeast).